The sequence spans 767 residues: Pyrin (767 aa).

The Pyrin domain occupies 1–92 (MAKTLGDHLL…AEELRKATGT (92 aa)). The tract at residues 94–219 (HLIEENRVGG…LQGLYNNAPG (126 aa)) is disordered. Composition is skewed to polar residues over residues 126-142 (GTQQ…SSQA), 165-176 (LDSQTKPWTRST), and 183-208 (TQGT…SSAG). Ser241 bears the Phosphoserine mark. The tract at residues 311 to 346 (TSLIGEERCPTSWTENGNGSPETTESSGETAGSILS) is disordered. Residues 321–340 (TSWTENGNGSPETTESSGET) show a composition bias toward polar residues. The segment at 439–481 (QSLPQCPRHMKQVLLLFCEDHREPICLICRLSLEHQGHRVRPI) adopts a B box-type zinc-finger fold. Zn(2+)-binding residues include Cys444, His447, Cys467, and His473. Residues 481-510 (IEEAALEYKEQIREQLERLREMRGYVEEHR) adopt a coiled-coil conformation. The interval 489-647 (KEQIREQLER…CFSEMLSSEM (159 aa)) is required for homotrimerization and induction of pyroptosomes. Residues 697-719 (GGSEPKDYLHPQPAQDTPELHEI) form a disordered region.

As to quaternary structure, homotrimer. Interacts (via the B box-type zinc finger) with PSTPIP1. Interacts (via the B30.2/SPRY domain) with several components of the inflammasome complex, including CASP1 p20 and p10 subunits, CASP5, PYCARD, NLRP1, NLRP2 and NLRP3, as well as with unprocessed IL1B; this interaction may lead to autophagic degradation of these proteins. Component of the AIM2 PANoptosome complex, a multiprotein complex that drives inflammatory cell death (PANoptosis). Interacts with NFKBIA and RELA. Interacts weakly with VASP and ACTR3. Interacts with active ULK1 (phosphorylated on 'Ser-317') and BECN1 simultaneously. Also interacts with ATG16L1 (via WD repeats), and with ATG8 family members, including GABARAP, GABARAPL1 and, to a lesser extent, GABARAPL2, MAP1LC3A/LC3A and MAP1LC3C/LC3C. Interacts with TRIM21. Interacts with YWHAB, YWHAE, YWHAG, YWHAH, YWHAQ and YWHAZ; the interaction is required for the down-regulation of pyrin pro-inflammatory activity. Post-translationally, phosphorylation at Ser-241 is required for the interaction with 14-3-3 proteins and down-regulation of pyrin pro-inflammatory activity. Degraded along with the delivery of its substrates to autolysosomal compartments (at protein level). In terms of tissue distribution, expressed in spleen peripheral blood granulocytes. Not expressed in lymphocytes, thymus, testis, ovary, heart, brain, lung, liver, kidney and muscle.

The protein localises to the cytoplasm. It localises to the cytoskeleton. Its subcellular location is the cell projection. It is found in the ruffle. The protein resides in the lamellipodium. The protein localises to the cytoplasmic vesicle. It localises to the autophagosome. Its subcellular location is the nucleus. In terms of biological role, involved in the regulation of innate immunity and the inflammatory response in response to IFNG/IFN-gamma. Organizes autophagic machinery by serving as a platform for the assembly of ULK1, Beclin 1/BECN1, ATG16L1, and ATG8 family members and recognizes specific autophagy targets, thus coordinating target recognition with assembly of the autophagic apparatus and initiation of autophagy. Acts as an autophagy receptor for the degradation of several inflammasome components, including CASP1, NLRP1 and NLRP3, hence preventing excessive IL1B- and IL18-mediated inflammation. However, it can also have a positive effect in the inflammatory pathway, acting as an innate immune sensor that triggers PYCARD/ASC specks formation, caspase-1 activation, and IL1B and IL18 production. Together with AIM2, also acts as a mediator of pyroptosis, necroptosis and apoptosis (PANoptosis), an integral part of host defense against pathogens, in response to bacterial infection. It is required for PSTPIP1-induced PYCARD/ASC oligomerization and inflammasome formation. Recruits PSTPIP1 to inflammasomes, and is required for PSTPIP1 oligomerization. This is Pyrin from Mus musculus (Mouse).